We begin with the raw amino-acid sequence, 332 residues long: Ketol-acid reductoisomerase (NADP(+)) 2 (332 aa).

The region spanning 2-182 (AELFYDADAD…GGTRAGVIRT (181 aa)) is the KARI N-terminal Rossmann domain. NADP(+) contacts are provided by residues 25 to 28 (YGSQ), serine 51, serine 53, and 83 to 86 (DPIQ). Histidine 108 is a catalytic residue. Glycine 134 serves as a coordination point for NADP(+). The KARI C-terminal knotted domain maps to 183-328 (TFTEETETDL…KELRKLMSWV (146 aa)). Positions 191, 195, 227, and 231 each coordinate Mg(2+). Residue serine 252 participates in substrate binding.

It belongs to the ketol-acid reductoisomerase family. Requires Mg(2+) as cofactor.

It catalyses the reaction (2R)-2,3-dihydroxy-3-methylbutanoate + NADP(+) = (2S)-2-acetolactate + NADPH + H(+). It carries out the reaction (2R,3R)-2,3-dihydroxy-3-methylpentanoate + NADP(+) = (S)-2-ethyl-2-hydroxy-3-oxobutanoate + NADPH + H(+). The protein operates within amino-acid biosynthesis; L-isoleucine biosynthesis; L-isoleucine from 2-oxobutanoate: step 2/4. Its pathway is amino-acid biosynthesis; L-valine biosynthesis; L-valine from pyruvate: step 2/4. Functionally, involved in the biosynthesis of branched-chain amino acids (BCAA). Catalyzes an alkyl-migration followed by a ketol-acid reduction of (S)-2-acetolactate (S2AL) to yield (R)-2,3-dihydroxy-isovalerate. In the isomerase reaction, S2AL is rearranged via a Mg-dependent methyl migration to produce 3-hydroxy-3-methyl-2-ketobutyrate (HMKB). In the reductase reaction, this 2-ketoacid undergoes a metal-dependent reduction by NADPH to yield (R)-2,3-dihydroxy-isovalerate. In Streptomyces coelicolor (strain ATCC BAA-471 / A3(2) / M145), this protein is Ketol-acid reductoisomerase (NADP(+)) 2.